The chain runs to 473 residues: Bifunctional protein HldE (473 aa).

Residues 1 to 318 (MKLSMPRFDQ…RAIQREEGSE (318 aa)) form a ribokinase region. Residue 194–197 (NLSE) participates in ATP binding. Asp263 is an active-site residue. The tract at residues 343-473 (FTNGCFDILH…TAIVEKIRKH (131 aa)) is cytidylyltransferase.

In the N-terminal section; belongs to the carbohydrate kinase PfkB family. It in the C-terminal section; belongs to the cytidylyltransferase family. As to quaternary structure, homodimer.

The enzyme catalyses D-glycero-beta-D-manno-heptose 7-phosphate + ATP = D-glycero-beta-D-manno-heptose 1,7-bisphosphate + ADP + H(+). It catalyses the reaction D-glycero-beta-D-manno-heptose 1-phosphate + ATP + H(+) = ADP-D-glycero-beta-D-manno-heptose + diphosphate. Its pathway is nucleotide-sugar biosynthesis; ADP-L-glycero-beta-D-manno-heptose biosynthesis; ADP-L-glycero-beta-D-manno-heptose from D-glycero-beta-D-manno-heptose 7-phosphate: step 1/4. It functions in the pathway nucleotide-sugar biosynthesis; ADP-L-glycero-beta-D-manno-heptose biosynthesis; ADP-L-glycero-beta-D-manno-heptose from D-glycero-beta-D-manno-heptose 7-phosphate: step 3/4. Catalyzes the phosphorylation of D-glycero-D-manno-heptose 7-phosphate at the C-1 position to selectively form D-glycero-beta-D-manno-heptose-1,7-bisphosphate. Its function is as follows. Catalyzes the ADP transfer from ATP to D-glycero-beta-D-manno-heptose 1-phosphate, yielding ADP-D-glycero-beta-D-manno-heptose. The polypeptide is Bifunctional protein HldE (Pseudomonas entomophila (strain L48)).